A 683-amino-acid polypeptide reads, in one-letter code: MGLPEDVAKRAAWYRSELERHSYAYYVLDAPTIPDTEYDKLFRELQELEQQYPELLTADSPTHRVGGVPLKEFPPRQHGVPMLSLNNAFAPEEVEAFDKRIRDGLETIAAVDYAVEPKFDGLAISLTYENGVFTCGATRGDGVTGEEVTPNLRTLRCIPLRLRGEGWPALIEIRGEVLMFKADFAELNARQRERGDKEFANPRNAAAGSLRQLDSKITAGRPLSFFAYGVGAGADALAVKTHGEMMGLLAAWGFPVAEERRVVQGVRGLLGYFVEIGVKRPGLPYDIDGVVYKVNRLDWQAQLGFVSRAPRFAIAHKFPAEEALTEVLGIDVQVGRTGAITPVARLKPVFVGGVTVTNATLHNEDEVRRKDVRLGDTVIVRRAGDVIPEVVAIVPEKRPMRDLFGSEPLNPPFELPATCPECGSAVVKGDDEAIARCTGGLYCPAQRKQALWHFAARRAMDIEGLGDKLVDQLVDAGLVHSPADLYGLTVETLAGLERMGEKSAQNLVAAIDKSRQTTLARFIFGLGIRNVGEATARDLAKHFGGLDALLAADSAALQMVPDVGPVVAESLAAFFAEAHNREVIDGLRRAGVSWPEGEPAQAGPQLLAGKTLVLTGTLPTLKRDEAKALVEAAGGKVAGSVSKKTDYVVAGEEAGSKLEKAQELGVPVIDEAELMKLLAKGVE.

Residues 35–39 (DTEYD), 84–85 (SL), and Glu116 contribute to the NAD(+) site. Lys118 acts as the N6-AMP-lysine intermediate in catalysis. 4 residues coordinate NAD(+): Arg139, Glu176, Lys293, and Lys317. Zn(2+)-binding residues include Cys419, Cys422, Cys437, and Cys443. The region spanning 602-683 (AGPQLLAGKT…LMKLLAKGVE (82 aa)) is the BRCT domain.

This sequence belongs to the NAD-dependent DNA ligase family. LigA subfamily. The cofactor is Mg(2+). Mn(2+) is required as a cofactor.

It catalyses the reaction NAD(+) + (deoxyribonucleotide)n-3'-hydroxyl + 5'-phospho-(deoxyribonucleotide)m = (deoxyribonucleotide)n+m + AMP + beta-nicotinamide D-nucleotide.. In terms of biological role, DNA ligase that catalyzes the formation of phosphodiester linkages between 5'-phosphoryl and 3'-hydroxyl groups in double-stranded DNA using NAD as a coenzyme and as the energy source for the reaction. It is essential for DNA replication and repair of damaged DNA. This is DNA ligase from Dechloromonas aromatica (strain RCB).